The following is a 1108-amino-acid chain: Multidrug resistance regulator 1 (1108 aa).

Positions methionine 1–proline 19 are enriched in polar residues. The segment at methionine 1–valine 27 is disordered. The segment at residues cysteine 31 to cysteine 59 is a DNA-binding region (zn(2)-C6 fungal-type). Over residues proline 68–proline 83 the composition is skewed to polar residues. Disordered stretches follow at residues proline 68–glutamate 138, aspartate 968–arginine 990, and alanine 1021–asparagine 1064. Basic and acidic residues-rich tracts occupy residues arginine 86–arginine 104 and asparagine 114–proline 123. Residues aspartate 124 to glutamate 138 are compositionally biased toward polar residues. A coiled-coil region spans residues alanine 134–asparagine 165. Composition is skewed to low complexity over residues threonine 970–threonine 980 and glutamine 1023–serine 1041.

The protein resides in the nucleus. In terms of biological role, transcription factor that acts as the central regulator of the MDR1 efflux pump. Other target genes include those encoding oxidoreductases, whose up-regulation in fluconazole-resistant isolates may help to prevent cell damage resulting from the generation of toxic molecules in the presence of fluconazole and thereby contribute to drug resistance. The chain is Multidrug resistance regulator 1 from Candida albicans (strain SC5314 / ATCC MYA-2876) (Yeast).